The sequence spans 93 residues: DNA-binding protein HU 1 (93 aa).

It belongs to the bacterial histone-like protein family. As to quaternary structure, homodimer.

Its subcellular location is the cytoplasm. The protein resides in the nucleoid. Its function is as follows. Histone-like DNA-binding protein which is capable of wrapping DNA to stabilize it, and thus to prevent its denaturation under extreme environmental conditions. This Streptomyces coelicolor (strain ATCC BAA-471 / A3(2) / M145) protein is DNA-binding protein HU 1 (hup1).